A 173-amino-acid chain; its full sequence is Glutamyl-tRNA(Gln) amidotransferase subunit C, mitochondrial (173 aa).

This sequence belongs to the GatC family. As to quaternary structure, subunit of the heterotrimeric GatCAB amidotransferase (AdT) complex, composed of A, B and C subunits.

The protein resides in the mitochondrion. The catalysed reaction is L-glutamyl-tRNA(Gln) + L-glutamine + ATP + H2O = L-glutaminyl-tRNA(Gln) + L-glutamate + ADP + phosphate + H(+). In terms of biological role, allows the formation of correctly charged Gln-tRNA(Gln) through the transamidation of misacylated Glu-tRNA(Gln) in the mitochondria. The reaction takes place in the presence of glutamine and ATP through an activated gamma-phospho-Glu-tRNA(Gln). In Drosophila persimilis (Fruit fly), this protein is Glutamyl-tRNA(Gln) amidotransferase subunit C, mitochondrial.